The primary structure comprises 173 residues: MTTMAARRSEAAPAPQQLRGSQLKQLRELFRRFDMNGDGSLTQLELAALLRSLGLRPTGDEVHALLAGMDANGNGSVEFDELAAAIAPVLTTQTHLVDQAQLLEVFRAFDRDGNGFISAAELARSMARLGQPLTFEELTRMMRDADTDGDGVISFKEFAAVMAKSALDFLGVA.

EF-hand domains are found at residues 21 to 56 (SQLK…LGLR), 57 to 92 (PTGD…VLTT), 97 to 132 (VDQA…LGQP), and 133 to 168 (LTFE…SALD). Ca(2+) is bound by residues Asp34, Asn36, Asp38, Ser40, Glu45, Asp70, Asn72, Asn74, Ser76, Glu81, Asp110, Asp112, Asn114, Glu121, Asp146, Asp148, Asp150, and Glu157.

Its function is as follows. Potential calcium sensor. The protein is Probable calcium-binding protein CML14 (CML14) of Oryza sativa subsp. japonica (Rice).